Here is a 671-residue protein sequence, read N- to C-terminus: Acetyl-coenzyme A synthetase 1 (671 aa).

Residues 210–213 (RGGK) and threonine 329 each bind CoA. ATP contacts are provided by residues 405 to 407 (GEP), 429 to 434 (DTYWQT), aspartate 520, and arginine 535. Serine 543 is a binding site for CoA. Arginine 546 is a binding site for ATP. Residue arginine 605 participates in CoA binding.

Belongs to the ATP-dependent AMP-binding enzyme family.

It carries out the reaction acetate + ATP + CoA = acetyl-CoA + AMP + diphosphate. In Debaryomyces hansenii (strain ATCC 36239 / CBS 767 / BCRC 21394 / JCM 1990 / NBRC 0083 / IGC 2968) (Yeast), this protein is Acetyl-coenzyme A synthetase 1 (ACS1).